Consider the following 212-residue polypeptide: Pyrrolidone-carboxylate peptidase (212 aa).

Catalysis depends on residues Glu-80, Cys-143, and His-165.

Belongs to the peptidase C15 family. In terms of assembly, homotetramer.

The protein localises to the cytoplasm. The catalysed reaction is Release of an N-terminal pyroglutamyl group from a polypeptide, the second amino acid generally not being Pro.. Its function is as follows. Removes 5-oxoproline from various penultimate amino acid residues except L-proline. In Vibrio vulnificus (strain YJ016), this protein is Pyrrolidone-carboxylate peptidase.